The primary structure comprises 704 residues: Elongation factor G (704 aa).

Residues 10–286 form the tr-type G domain; that stretch reads KKVRNIGIMA…AVIDFLPNPM (277 aa). GTP-binding positions include 19-26, 83-87, and 137-140; these read AHIDAGKT, DTPGH, and NKMD.

This sequence belongs to the TRAFAC class translation factor GTPase superfamily. Classic translation factor GTPase family. EF-G/EF-2 subfamily.

The protein resides in the cytoplasm. Functionally, catalyzes the GTP-dependent ribosomal translocation step during translation elongation. During this step, the ribosome changes from the pre-translocational (PRE) to the post-translocational (POST) state as the newly formed A-site-bound peptidyl-tRNA and P-site-bound deacylated tRNA move to the P and E sites, respectively. Catalyzes the coordinated movement of the two tRNA molecules, the mRNA and conformational changes in the ribosome. This chain is Elongation factor G, found in Corynebacterium jeikeium (strain K411).